The chain runs to 419 residues: Tyrosine--tRNA ligase 2 (419 aa).

An L-tyrosine-binding site is contributed by Y34. Residues 39–48 (PTGDSMHIGH) carry the 'HIGH' region motif. 2 residues coordinate L-tyrosine: Y168 and Q172. The 'KMSKS' region signature appears at 230–234 (KFGKS). An ATP-binding site is contributed by K233. Residues 352 to 418 (KNIVEWLVDL…GKKNYSLVKL (67 aa)) enclose the S4 RNA-binding domain.

The protein belongs to the class-I aminoacyl-tRNA synthetase family. TyrS type 1 subfamily. In terms of assembly, homodimer.

The protein resides in the cytoplasm. The enzyme catalyses tRNA(Tyr) + L-tyrosine + ATP = L-tyrosyl-tRNA(Tyr) + AMP + diphosphate + H(+). In terms of biological role, catalyzes the attachment of tyrosine to tRNA(Tyr) in a two-step reaction: tyrosine is first activated by ATP to form Tyr-AMP and then transferred to the acceptor end of tRNA(Tyr). The sequence is that of Tyrosine--tRNA ligase 2 from Bacillus anthracis.